The chain runs to 483 residues: Galactose-3-O-sulfotransferase 4 (483 aa).

The Cytoplasmic segment spans residues 1–18 (MGVLSPTRTMRLWGPRSL). Residues 19 to 39 (GVALGVFMTIGFALQLLGGPF) form a helical; Signal-anchor for type II membrane protein membrane-spanning segment. Topologically, residues 40–483 (QRRLPGLQLR…PLKTSRRPSP (444 aa)) are lumenal. Positions 225 to 248 (KRGNPHVSRDPNPPQLPSGAGPPA) are disordered. The N-linked (GlcNAc...) asparagine glycan is linked to Asn371.

The protein belongs to the galactose-3-O-sulfotransferase family. Mn(2+) serves as cofactor.

The protein localises to the golgi apparatus. It localises to the golgi stack membrane. The protein operates within protein modification; carbohydrate sulfation. In terms of biological role, catalyzes the transfer of sulfate to beta-1,3-linked galactose residues in O-linked glycoproteins. Good substrates include asialofetuin, Gal-beta-1,3-GalNAc and Gal-beta-1,3 (GlcNAc-beta-1,6)GalNAc. This Bos taurus (Bovine) protein is Galactose-3-O-sulfotransferase 4 (GAL3ST4).